A 158-amino-acid chain; its full sequence is uncharacterized protein (158 aa).

The HTH hxlR-type domain maps to 13-110 (ESVGRALELV…WGDEYLPRPE (98 aa)).

This is an uncharacterized protein from Mycobacterium tuberculosis (strain ATCC 25618 / H37Rv).